The following is a 140-amino-acid chain: Vacuolar protein sorting-associated protein 55 homolog (140 aa).

The Cytoplasmic segment spans residues Met-1–Lys-16. Residues Ile-17–Leu-37 traverse the membrane as a helical segment. Over Phe-38 to Asn-40 the chain is Lumenal. Residues Trp-41 to Gly-61 traverse the membrane as a helical segment. Residues Gly-62–Ser-75 are Cytoplasmic-facing. Residues Trp-76–Leu-98 form a helical membrane-spanning segment. Residues Lys-99 to Ala-108 lie on the Lumenal side of the membrane. A helical transmembrane segment spans residues Leu-109–Ile-129. The Cytoplasmic segment spans residues Gly-130–Ile-140.

This sequence belongs to the OB-RGRP/VPS55 family.

It is found in the endosome membrane. Its function is as follows. Involved in endosomal protein transport. The protein is Vacuolar protein sorting-associated protein 55 homolog of Arabidopsis thaliana (Mouse-ear cress).